A 186-amino-acid chain; its full sequence is Methyl-CpG-binding domain-containing protein 4 (186 aa).

The CW-type zinc finger occupies 22–77 (GRLIDTYAAQCDNCHKWRVIDSQEEYEDIRSKMLEDPFNCQKKQGMSCEEPADIDY). The MBD-associated domain (MAD) motif lies at 31 to 69 (QCDNCHKWRVIDSQEEYEDIRSKMLEDPFNCQKKQGMSC). The Zn(2+) site is built by Cys32, Cys35, Cys61, and Cys69. An MBD domain is found at 83-153 (WVIDKPGLPK…GDFNFTVPKV (71 aa)). A disordered region spans residues 154–186 (MEDTVPPDPKLGSPFPSTTTTTSEKSSVKQSHN). Over residues 166 to 178 (SPFPSTTTTTSEK) the composition is skewed to low complexity.

In terms of tissue distribution, expressed in rosette leaves, buds, flowers, stems, mature seeds and roots.

The protein localises to the nucleus. In terms of biological role, transcriptional regulator that binds CpG, CpNpN and CpNpG (N is A, T, or C) islands in promoters regardless the DNA methylation status. Plays probably a role in gene silencing. The chain is Methyl-CpG-binding domain-containing protein 4 (MBD4) from Arabidopsis thaliana (Mouse-ear cress).